Here is a 541-residue protein sequence, read N- to C-terminus: uncharacterized protein (541 aa).

The next 5 membrane-spanning stretches (helical) occupy residues 4 to 23, 30 to 47, 57 to 79, 91 to 113, and 156 to 178; these read FVAN…LAIG, FSLG…FAAV, VYIL…AFFA, LAIT…IHLN, and LVAY…GLCA. RCK C-terminal domains follow at residues 187 to 271 and 273 to 354; these read QEAH…VLGD and LPGD…LFGD. Transmembrane regions (helical) follow at residues 362 to 384, 389 to 411, 424 to 446, 456 to 478, and 516 to 538; these read FNLF…EVPL, ALSL…VGRS, LALR…GASF, LTII…VVGY, and LGYT…VVLF.

Belongs to the AAE transporter (TC 2.A.81) family.

It localises to the cell membrane. This is an uncharacterized protein from Corynebacterium diphtheriae (strain ATCC 700971 / NCTC 13129 / Biotype gravis).